Reading from the N-terminus, the 210-residue chain is Syntaxin-binding protein 6 (210 aa).

S2 carries the post-translational modification N-acetylserine. In terms of domain architecture, v-SNARE coiled-coil homology spans G151–C210.

As to quaternary structure, part of a ternary complex containing SNAP25 and STX1A that can be dissociated by NAPA and NSF. Interacts with STX4A.

The protein resides in the cytoplasm. Its subcellular location is the membrane. Its function is as follows. Forms non-fusogenic complexes with SNAP25 and STX1A and may thereby modulate the formation of functional SNARE complexes and exocytosis. The protein is Syntaxin-binding protein 6 (STXBP6) of Bos taurus (Bovine).